A 252-amino-acid polypeptide reads, in one-letter code: Hydroxyacylglutathione hydrolase (252 aa).

Zn(2+)-binding residues include H54, H56, D58, H59, H113, D132, and H170.

This sequence belongs to the metallo-beta-lactamase superfamily. Glyoxalase II family. In terms of assembly, monomer. The cofactor is Zn(2+).

It catalyses the reaction an S-(2-hydroxyacyl)glutathione + H2O = a 2-hydroxy carboxylate + glutathione + H(+). It participates in secondary metabolite metabolism; methylglyoxal degradation; (R)-lactate from methylglyoxal: step 2/2. Thiolesterase that catalyzes the hydrolysis of S-D-lactoyl-glutathione to form glutathione and D-lactic acid. This is Hydroxyacylglutathione hydrolase from Gloeobacter violaceus (strain ATCC 29082 / PCC 7421).